The primary structure comprises 480 residues: Protein nucleotidyltransferase YdiU (480 aa).

ATP contacts are provided by glycine 86, glycine 88, arginine 89, lysine 109, aspartate 121, glycine 122, arginine 172, and arginine 179. Aspartate 248 functions as the Proton acceptor in the catalytic mechanism. 2 residues coordinate Mg(2+): asparagine 249 and aspartate 258. ATP is bound at residue aspartate 258.

This sequence belongs to the SELO family. Requires Mg(2+) as cofactor. It depends on Mn(2+) as a cofactor.

The enzyme catalyses L-seryl-[protein] + ATP = 3-O-(5'-adenylyl)-L-seryl-[protein] + diphosphate. It catalyses the reaction L-threonyl-[protein] + ATP = 3-O-(5'-adenylyl)-L-threonyl-[protein] + diphosphate. The catalysed reaction is L-tyrosyl-[protein] + ATP = O-(5'-adenylyl)-L-tyrosyl-[protein] + diphosphate. It carries out the reaction L-histidyl-[protein] + UTP = N(tele)-(5'-uridylyl)-L-histidyl-[protein] + diphosphate. The enzyme catalyses L-seryl-[protein] + UTP = O-(5'-uridylyl)-L-seryl-[protein] + diphosphate. It catalyses the reaction L-tyrosyl-[protein] + UTP = O-(5'-uridylyl)-L-tyrosyl-[protein] + diphosphate. In terms of biological role, nucleotidyltransferase involved in the post-translational modification of proteins. It can catalyze the addition of adenosine monophosphate (AMP) or uridine monophosphate (UMP) to a protein, resulting in modifications known as AMPylation and UMPylation. This chain is Protein nucleotidyltransferase YdiU, found in Salmonella paratyphi C (strain RKS4594).